Consider the following 554-residue polypeptide: 3-(3-hydroxy-phenyl)propionate/3-hydroxycinnamic acid hydroxylase (554 aa).

FAD is bound by residues 17–46 (QVAI…VVEK) and 285–295 (FRIDRVLLAGD).

It belongs to the PheA/TfdB FAD monooxygenase family. FAD serves as cofactor.

It catalyses the reaction 3-(3-hydroxyphenyl)propanoate + NADH + O2 + H(+) = 3-(2,3-dihydroxyphenyl)propanoate + NAD(+) + H2O. It carries out the reaction (2E)-3-(3-hydroxyphenyl)prop-2-enoate + NADH + O2 + H(+) = (2E)-3-(2,3-dihydroxyphenyl)prop-2-enoate + NAD(+) + H2O. Its pathway is aromatic compound metabolism; 3-phenylpropanoate degradation. In terms of biological role, catalyzes the insertion of one atom of molecular oxygen into position 2 of the phenyl ring of 3-(3-hydroxyphenyl)propionate (3-HPP) and hydroxycinnamic acid (3HCI). The protein is 3-(3-hydroxy-phenyl)propionate/3-hydroxycinnamic acid hydroxylase of Escherichia coli O139:H28 (strain E24377A / ETEC).